Here is a 379-residue protein sequence, read N- to C-terminus: Deoxyguanosinetriphosphate triphosphohydrolase-like protein (379 aa).

The region spanning 69–200 (RLTHTIEVAQ…ANLADEIAYS (132 aa)) is the HD domain.

The protein belongs to the dGTPase family. Type 2 subfamily.

This Azoarcus sp. (strain BH72) protein is Deoxyguanosinetriphosphate triphosphohydrolase-like protein.